A 330-amino-acid polypeptide reads, in one-letter code: Solute-binding protein NAS141_03721 (330 aa).

Residues methionine 1–alanine 27 form the signal peptide. Residues glutamate 75, asparagine 97, arginine 153, arginine 173, tyrosine 196, asparagine 213 to glutamate 214, and arginine 240 contribute to the alpha-D-mannuronate site. Residues glutamate 75, asparagine 97, arginine 153, arginine 173, tyrosine 196, asparagine 213–glutamate 214, and arginine 240 each bind alpha-D-taluronate.

This sequence belongs to the bacterial solute-binding protein 7 family. The complex is comprised of an extracytoplasmic solute-binding protein and a heteromeric permease formed by two transmembrane proteins.

The protein localises to the periplasm. Solute-binding protein that binds D-mannuronate and D-taluronate (in vitro). Probably part of a tripartite ATP-independent periplasmic (TRAP) transport system that mediates solute transport into the cytoplasm. The chain is Solute-binding protein NAS141_03721 from Sulfitobacter sp. (strain NAS-14.1).